The chain runs to 312 residues: Dihydroorotate dehydrogenase B (NAD(+)), catalytic subunit (312 aa).

FMN is bound by residues S23 and 47–48; that span reads KA. Substrate is bound by residues K47 and 71-75; that span reads NAIGL. FMN-binding residues include N102 and N130. Residue N130 participates in substrate binding. The active-site Nucleophile is C133. K168 and I194 together coordinate FMN. Residue 195-196 participates in substrate binding; the sequence is NT. FMN is bound by residues G220, 246–247, and 268–269; these read GG and GT.

The protein belongs to the dihydroorotate dehydrogenase family. Type 1 subfamily. In terms of assembly, heterotetramer of 2 PyrK and 2 PyrD type B subunits. FMN is required as a cofactor.

The protein resides in the cytoplasm. The catalysed reaction is (S)-dihydroorotate + NAD(+) = orotate + NADH + H(+). Its pathway is pyrimidine metabolism; UMP biosynthesis via de novo pathway; orotate from (S)-dihydroorotate (NAD(+) route): step 1/1. Functionally, catalyzes the conversion of dihydroorotate to orotate with NAD(+) as electron acceptor. This Enterococcus faecalis (strain ATCC 700802 / V583) protein is Dihydroorotate dehydrogenase B (NAD(+)), catalytic subunit (pyrDB).